The chain runs to 155 residues: SsrA-binding protein (155 aa).

This sequence belongs to the SmpB family.

It localises to the cytoplasm. Functionally, required for rescue of stalled ribosomes mediated by trans-translation. Binds to transfer-messenger RNA (tmRNA), required for stable association of tmRNA with ribosomes. tmRNA and SmpB together mimic tRNA shape, replacing the anticodon stem-loop with SmpB. tmRNA is encoded by the ssrA gene; the 2 termini fold to resemble tRNA(Ala) and it encodes a 'tag peptide', a short internal open reading frame. During trans-translation Ala-aminoacylated tmRNA acts like a tRNA, entering the A-site of stalled ribosomes, displacing the stalled mRNA. The ribosome then switches to translate the ORF on the tmRNA; the nascent peptide is terminated with the 'tag peptide' encoded by the tmRNA and targeted for degradation. The ribosome is freed to recommence translation, which seems to be the essential function of trans-translation. This is SsrA-binding protein from Streptococcus equi subsp. zooepidemicus (strain H70).